The sequence spans 483 residues: Cysteine--tRNA ligase (483 aa).

Cys-29 is a binding site for Zn(2+). The short motif at 31 to 41 is the 'HIGH' region element; it reads PTVYGHAHLGH. Zn(2+) is bound by residues Cys-221, His-246, and Glu-250. A 'KMSKS' region motif is present at residues 278–282; the sequence is KMGKS. Lys-281 lines the ATP pocket.

It belongs to the class-I aminoacyl-tRNA synthetase family. In terms of assembly, monomer. It depends on Zn(2+) as a cofactor.

The protein localises to the cytoplasm. It catalyses the reaction tRNA(Cys) + L-cysteine + ATP = L-cysteinyl-tRNA(Cys) + AMP + diphosphate. The protein is Cysteine--tRNA ligase of Chlorobium luteolum (strain DSM 273 / BCRC 81028 / 2530) (Pelodictyon luteolum).